Reading from the N-terminus, the 401-residue chain is Imidazolonepropionase (401 aa).

Residues H66 and H68 each coordinate Fe(3+). The Zn(2+) site is built by H66 and H68. Residues R75, Y138, and H171 each contribute to the 4-imidazolone-5-propanoate site. An N-formimidoyl-L-glutamate-binding site is contributed by Y138. H236 is a binding site for Fe(3+). Position 236 (H236) interacts with Zn(2+). 4-imidazolone-5-propanoate is bound at residue Q239. Residue D311 coordinates Fe(3+). Zn(2+) is bound at residue D311. 2 residues coordinate N-formimidoyl-L-glutamate: N313 and G315. T316 contacts 4-imidazolone-5-propanoate.

The protein belongs to the metallo-dependent hydrolases superfamily. HutI family. It depends on Zn(2+) as a cofactor. The cofactor is Fe(3+).

The protein localises to the cytoplasm. It carries out the reaction 4-imidazolone-5-propanoate + H2O = N-formimidoyl-L-glutamate. It functions in the pathway amino-acid degradation; L-histidine degradation into L-glutamate; N-formimidoyl-L-glutamate from L-histidine: step 3/3. In terms of biological role, catalyzes the hydrolytic cleavage of the carbon-nitrogen bond in imidazolone-5-propanoate to yield N-formimidoyl-L-glutamate. It is the third step in the universal histidine degradation pathway. The protein is Imidazolonepropionase of Acinetobacter baumannii (strain ACICU).